The sequence spans 555 residues: Urocanate hydratase (555 aa).

NAD(+) is bound by residues 51 to 52 (GG), Gln-129, 175 to 177 (GMG), Glu-195, 262 to 266 (QTSAH), 272 to 273 (YL), and Tyr-321. Cys-409 is a catalytic residue. Gly-491 serves as a coordination point for NAD(+).

Belongs to the urocanase family. Requires NAD(+) as cofactor.

The protein localises to the cytoplasm. The catalysed reaction is 4-imidazolone-5-propanoate = trans-urocanate + H2O. Its pathway is amino-acid degradation; L-histidine degradation into L-glutamate; N-formimidoyl-L-glutamate from L-histidine: step 2/3. Its function is as follows. Catalyzes the conversion of urocanate to 4-imidazolone-5-propionate. The sequence is that of Urocanate hydratase from Xanthomonas campestris pv. campestris (strain ATCC 33913 / DSM 3586 / NCPPB 528 / LMG 568 / P 25).